We begin with the raw amino-acid sequence, 426 residues long: Adenylosuccinate synthetase (426 aa).

Residues 11–17 and 39–41 contribute to the GTP site; these read GDEGKGK and GHT. Catalysis depends on aspartate 12, which acts as the Proton acceptor. Mg(2+) contacts are provided by aspartate 12 and glycine 39. IMP is bound by residues 12–15, 37–40, threonine 130, arginine 144, asparagine 226, threonine 241, and arginine 305; these read DEGK and NAGH. Histidine 40 (proton donor) is an active-site residue. 301–307 contributes to the substrate binding site; that stretch reads VTTGRKR. Residues arginine 307, 333-335, and 415-417 each bind GTP; these read KLD and GTG.

Belongs to the adenylosuccinate synthetase family. As to quaternary structure, homodimer. Mg(2+) is required as a cofactor.

The protein resides in the cytoplasm. It catalyses the reaction IMP + L-aspartate + GTP = N(6)-(1,2-dicarboxyethyl)-AMP + GDP + phosphate + 2 H(+). Its pathway is purine metabolism; AMP biosynthesis via de novo pathway; AMP from IMP: step 1/2. Plays an important role in the de novo pathway and in the salvage pathway of purine nucleotide biosynthesis. Catalyzes the first committed step in the biosynthesis of AMP from IMP. The sequence is that of Adenylosuccinate synthetase from Meyerozyma guilliermondii (strain ATCC 6260 / CBS 566 / DSM 6381 / JCM 1539 / NBRC 10279 / NRRL Y-324) (Yeast).